The following is a 424-amino-acid chain: 3-phosphoshikimate 1-carboxyvinyltransferase (424 aa).

The 3-phosphoshikimate site is built by K20, S21, and R25. K20 provides a ligand contact to phosphoenolpyruvate. The phosphoenolpyruvate site is built by G92 and R120. Residues S165, Q167, D313, and K340 each coordinate 3-phosphoshikimate. A phosphoenolpyruvate-binding site is contributed by Q167. The active-site Proton acceptor is D313. 2 residues coordinate phosphoenolpyruvate: R344 and R386.

The protein belongs to the EPSP synthase family. Monomer.

The protein localises to the cytoplasm. It carries out the reaction 3-phosphoshikimate + phosphoenolpyruvate = 5-O-(1-carboxyvinyl)-3-phosphoshikimate + phosphate. The protein operates within metabolic intermediate biosynthesis; chorismate biosynthesis; chorismate from D-erythrose 4-phosphate and phosphoenolpyruvate: step 6/7. Its function is as follows. Catalyzes the transfer of the enolpyruvyl moiety of phosphoenolpyruvate (PEP) to the 5-hydroxyl of shikimate-3-phosphate (S3P) to produce enolpyruvyl shikimate-3-phosphate and inorganic phosphate. This Bacillus cytotoxicus (strain DSM 22905 / CIP 110041 / 391-98 / NVH 391-98) protein is 3-phosphoshikimate 1-carboxyvinyltransferase.